The chain runs to 1124 residues: MSSSRPSQSSTTSARSKHSARIIAQTTIDAKLHADFEESGDSFDYSSSVRVTSVAGDERKPKSDRVTTAYLNQIQKGKFIQPFGCLLALDEKTFKVIAFSENAPEMLTMVSHAVPSVGELPALGIGTDIRTIFTGPSAAALQKALGFGEVSLLNPVLVHCKTSGKPYYAIVHRVTGSLIIDFEPVKPYEVPMTAAGALQSYKLAAKAITRLQALPSGSMERLCDTMVQEVFELTGYDRVMTYKFHDDDHGEVVAEITKPGLDPYLGLHYPATDIPQAARFLFMKNKVRMICDCRAKHVKVVQDEKLPFDLTLCGSTLRAPHYCHLQYMENMSSIASLVMAVVVNDGDEEGESSDSTQSQKRKRLWGLVVCHNTTPRFVPFPLRYACEFLAQVFAIHVNKELELESQILEKNILRTQTLLCDMLMRVAPLGIVSQSPNIMDLVKCDGAALLYKNKIHRLGMTPSDFQLHDIVSWLSEYHTDSTGLSTDSLYDAGFPGALALGDVVCGMAAVRISDKGWLFWYRSHTAAEVRWGGAKHEPGEKDDGRKMHPRSSFKAFLEVVKTRSVPWKDYEMDAIHSLQLILRNASKDADAMDSNTNIIHTKLNDLKIDGLQELEAVTAEMVRLIETASVPIFAVDVDGQLNGWNTKIAELTGLPVDEAIGNHLLTLVEDSSVDTVSKMLELALQGKEERNVEFEIKTHGPSGDSSPISLIVNACASRDVGDSVVGVCFIAQDITGQKNIMDKFTRIEGDYRAIIQNPHPLIPPIFGTDQFGWCSEWNSAMTKLTGWRRDDVIDKMLLGEVFGTQAACCRLKNQEAFVNFGVVLNNAMTGQECAKISFGFFARNGKYVECLLCVSKRLDREGAVTGLFCFLQLASHELQQALHIQRLSEQTALKRLKVLAYIRRQIRNPLSGIIFSRKMLEGTNLGEEQKNILRTSSQCQRQLNKILDDTDLDSIIDGYLDLEMLEFKLHEVLVASISQIMMKSNGKNIMIVNDMVEDLLNETLYGDSPRLQQVLANFLLVCVNSTPSGGQLSISGTLTKDRIGESVQLALLEVRISHTGGGVPEELLSQMFGTEAEASEEGISLLISRKLVKLMNGEVQYLREAGRSTFIISVELAVATKSSC.

The span at 1 to 14 (MSSSRPSQSSTTSA) shows a compositional bias: low complexity. Residues 1–20 (MSSSRPSQSSTTSARSKHSA) are disordered. Residues 218–401 (SMERLCDTMV…VFAIHVNKEL (184 aa)) enclose the GAF domain. A phytochromobilin-binding site is contributed by Cys323. Positions 617–687 (VTAEMVRLIE…KMLELALQGK (71 aa)) constitute a PAS 1 domain. The region spanning 690–746 (RNVEFEIKTHGPSGDSSPISLIVNACASRDVGDSVVGVCFIAQDITGQKNIMDKFTR) is the PAC domain. A PAS 2 domain is found at 747–821 (IEGDYRAIIQ…KNQEAFVNFG (75 aa)). The Histidine kinase domain occupies 901–1118 (YIRRQIRNPL…TFIISVELAV (218 aa)).

This sequence belongs to the phytochrome family. Homodimer. Contains one covalently linked phytochromobilin chromophore.

In terms of biological role, regulatory photoreceptor which exists in two forms that are reversibly interconvertible by light: the Pr form that absorbs maximally in the red region of the spectrum and the Pfr form that absorbs maximally in the far-red region. Photoconversion of Pr to Pfr induces an array of morphogenic responses, whereas reconversion of Pfr to Pr cancels the induction of those responses. Pfr controls the expression of a number of nuclear genes including those encoding the small subunit of ribulose-bisphosphate carboxylase, chlorophyll A/B binding protein, protochlorophyllide reductase, rRNA, etc. It also controls the expression of its own gene(s) in a negative feedback fashion. The protein is Phytochrome A1 (PHYA1) of Nicotiana tabacum (Common tobacco).